The following is a 178-amino-acid chain: Large ribosomal subunit protein bL25 (178 aa).

Belongs to the bacterial ribosomal protein bL25 family. CTC subfamily. As to quaternary structure, part of the 50S ribosomal subunit; part of the 5S rRNA/L5/L18/L25 subcomplex. Contacts the 5S rRNA. Binds to the 5S rRNA independently of L5 and L18.

Functionally, this is one of the proteins that binds to the 5S RNA in the ribosome where it forms part of the central protuberance. This is Large ribosomal subunit protein bL25 from Helicobacter pylori (strain P12).